Reading from the N-terminus, the 624-residue chain is Matrilin-4 (624 aa).

The signal sequence occupies residues 1–21 (MRGPCCWPLSLLLLFLQSWET). The VWFA 1 domain maps to 36–215 (DLVFMIDSSR…EFGLQFQGRL (180 aa)). Asn71 carries N-linked (GlcNAc...) asparagine glycosylation. EGF-like domains are found at residues 217-257 (GKDL…KNCL), 258-298 (ALDL…RSCR), 299-339 (AIDY…RSCR), and 340-380 (VRDF…KSCD). 12 disulfides stabilise this stretch: Cys221–Cys232, Cys228–Cys241, Cys243–Cys256, Cys262–Cys273, Cys269–Cys282, Cys284–Cys297, Cys303–Cys314, Cys310–Cys323, Cys325–Cys338, Cys344–Cys355, Cys351–Cys364, and Cys366–Cys379. The N-linked (GlcNAc...) asparagine glycan is linked to Asn307. The VWFA 2 domain maps to 388-563 (DLVLLVDGSK…STMTHLLENL (176 aa)). Residues 590–623 (EFQGRTLGALESLTQNLARLTERLEELENQLASR) adopt a coiled-coil conformation.

In terms of assembly, interacts with COMP. Lung, brain, sternum, kidney and heart.

It is found in the secreted. Its function is as follows. Major component of the extracellular matrix of cartilage. This is Matrilin-4 (Matn4) from Mus musculus (Mouse).